Consider the following 99-residue polypeptide: Plastocyanin (99 aa).

Positions 1 to 99 (AEVLLGSSDG…AGMVGKVTVN (99 aa)) constitute a Plastocyanin-like domain. Cu cation is bound by residues histidine 37, cysteine 84, histidine 87, and methionine 92.

This sequence belongs to the plastocyanin family. Requires Cu(2+) as cofactor.

The protein localises to the plastid. The protein resides in the chloroplast thylakoid membrane. Functionally, participates in electron transfer between P700 and the cytochrome b6-f complex in photosystem I. This is Plastocyanin (PETE) from Lactuca sativa (Garden lettuce).